Consider the following 348-residue polypeptide: Uroporphyrinogen decarboxylase (348 aa).

Residues R27–R31, F46, D76, Y152, S207, and H320 each bind substrate.

Belongs to the uroporphyrinogen decarboxylase family. As to quaternary structure, homodimer.

It localises to the cytoplasm. It carries out the reaction uroporphyrinogen III + 4 H(+) = coproporphyrinogen III + 4 CO2. Its pathway is porphyrin-containing compound metabolism; protoporphyrin-IX biosynthesis; coproporphyrinogen-III from 5-aminolevulinate: step 4/4. Functionally, catalyzes the decarboxylation of four acetate groups of uroporphyrinogen-III to yield coproporphyrinogen-III. In Bacillus cereus (strain B4264), this protein is Uroporphyrinogen decarboxylase.